The sequence spans 1224 residues: uncharacterized protein (1224 aa).

Disordered stretches follow at residues 1-67, 111-151, 193-270, 316-416, 430-957, and 1078-1167; these read MNQD…SSSI, QQSH…PPPL, QTEL…DPNI, DYNN…TVKK, SDSG…QEEK, and SFLP…TSHV. Residues 10-48 show a composition bias toward low complexity; the sequence is SFHSNNNSNSNHHHSYNNSINSGSSSSGSNNSSNNNSFN. A compositionally biased stretch (acidic residues) spans 49 to 58; sequence DEIEGGEIQE. Composition is skewed to low complexity over residues 126-140, 193-212, and 228-241; these read SSSSSSSSSSSSSSS, QTELQNKSTPSKTSSASSPP, and SAPTSAPTSSSVSS. The span at 242–255 shows a compositional bias: polar residues; the sequence is LTQPQKPKSVQYSQ. The segment covering 260–270 has biased composition (basic and acidic residues); the sequence is EIREEKVDPNI. Residues 316–338 show a composition bias toward low complexity; that stretch reads DYNNSNSNNSNNNNNNNNSITEN. The segment covering 341–353 has biased composition (polar residues); it reads DKMINNQPSSTNS. Composition is skewed to low complexity over residues 379–413 and 430–450; these read TTTTTTTTTTSSTSEPIKSPNSSSSTNSSASTTPT and SDSGTNKESNSSNSSSTTSTP. 2 stretches are compositionally biased toward basic and acidic residues: residues 451–585 and 630–646; these read KSKD…DKKK and EIDKSDKRSQKKSKVES. Over residues 662 to 719 the composition is skewed to low complexity; that stretch reads TTTTTTSTSSSSSLPSLSSSSSSLPLPSSSSSSSSSSSSSSSSSSSSSSSSSSSTTST. A compositionally biased stretch (pro residues) spans 727-750; it reads PPPPPQQPPPPPPQQPPPPPPPIN. Residues 755-892 are compositionally biased toward basic and acidic residues; sequence SEHDKKIIEK…SDRDRDRKDS (138 aa). The span at 893–933 shows a compositional bias: low complexity; the sequence is NSNNNSNNNNNNNNNNNNNNNNNNNNKKDNNNNNNNNNNNN. Positions 948–957 are enriched in basic and acidic residues; that stretch reads TPKKTKQEEK. Residues 950–991 adopt a coiled-coil conformation; that stretch reads KKTKQEEKLIRSQIDQIKEDAKDLKKLAKELQSKNQNECLEM. Composition is skewed to low complexity over residues 1078-1108 and 1114-1165; these read SFLPNSSSSSKSSSSSSSSSNQPANPATAPL and NPSE…PNTS.

This is an uncharacterized protein from Dictyostelium discoideum (Social amoeba).